The sequence spans 485 residues: Zinc finger protein 639 (485 aa).

Residues 1–14 (MNEYPKKRKRKTLH) show a composition bias toward basic residues. Disordered stretches follow at residues 1–23 (MNEY…DSSG) and 54–80 (DNKD…ARNR). Serine 60 carries the phosphoserine modification. Lysine 76 participates in a covalent cross-link: Glycyl lysine isopeptide (Lys-Gly) (interchain with G-Cter in SUMO2). Serine 88 is subject to Phosphoserine. The interval 115–136 (ASPESVHQHTQEESPIEVHTSE) is disordered. Glycyl lysine isopeptide (Lys-Gly) (interchain with G-Cter in SUMO2) cross-links involve residues lysine 177, lysine 181, and lysine 226. 8 consecutive C2H2-type zinc fingers follow at residues 204-227 (YKCE…ILKH), 233-255 (NVCR…AKLH), 260-283 (YICK…ADTH), 289-311 (YWCE…FQEH), 374-397 (FVCQ…AIEH), 403-425 (HVCD…LNSH), 431-454 (YLCQ…DFKH), and 460-482 (HKCS…LQVH). The interval 371–455 (KNFFVCQVCG…LKIHLDFKHS (85 aa)) is interaction with CTNNA2.

Belongs to the krueppel C2H2-type zinc-finger protein family. As to quaternary structure, interacts with CTNNA2.

It localises to the nucleus. Binds DNA and may function as a transcriptional repressor. The polypeptide is Zinc finger protein 639 (Znf639) (Mus musculus (Mouse)).